The following is a 451-amino-acid chain: Methylenetetrahydrofolate--tRNA-(uracil-5-)-methyltransferase TrmFO (451 aa).

9-14 contacts FAD; sequence GGGMAG.

The protein belongs to the MnmG family. TrmFO subfamily. The cofactor is FAD.

Its subcellular location is the cytoplasm. It carries out the reaction uridine(54) in tRNA + (6R)-5,10-methylene-5,6,7,8-tetrahydrofolate + NADH + H(+) = 5-methyluridine(54) in tRNA + (6S)-5,6,7,8-tetrahydrofolate + NAD(+). It catalyses the reaction uridine(54) in tRNA + (6R)-5,10-methylene-5,6,7,8-tetrahydrofolate + NADPH + H(+) = 5-methyluridine(54) in tRNA + (6S)-5,6,7,8-tetrahydrofolate + NADP(+). Catalyzes the folate-dependent formation of 5-methyl-uridine at position 54 (M-5-U54) in all tRNAs. In Dinoroseobacter shibae (strain DSM 16493 / NCIMB 14021 / DFL 12), this protein is Methylenetetrahydrofolate--tRNA-(uracil-5-)-methyltransferase TrmFO.